A 135-amino-acid polypeptide reads, in one-letter code: Large ribosomal subunit protein uL16c (135 aa).

A compositionally biased stretch (basic residues) spans 1 to 17 (MLSPKRTRFRKQHRGRM). Residues 1–20 (MLSPKRTRFRKQHRGRMKGT) form a disordered region.

This sequence belongs to the universal ribosomal protein uL16 family. Part of the 50S ribosomal subunit.

The protein resides in the plastid. The protein localises to the chloroplast. The protein is Large ribosomal subunit protein uL16c of Lemna minor (Common duckweed).